A 399-amino-acid chain; its full sequence is Integral membrane protein GPR137B (399 aa).

A disordered region spans residues 1 to 22 (MRPERPRPRGSAPGPMETPPWD). Residues 1-46 (MRPERPRPRGSAPGPMETPPWDPARNDSLPPTLTPAVPPYVKLGLT) lie on the Lumenal side of the membrane. N26 carries N-linked (GlcNAc...) asparagine glycosylation. The helical transmembrane segment at 47-67 (VVYTVFYALLFVFIYVQLWLV) threads the bilayer. At 68–79 (LRYRHKRLSYQS) the chain is on the cytoplasmic side. Residues 80-100 (VFLFLCLFWASLRTVLFSFYF) form a helical membrane-spanning segment. At 101–111 (KDFVAANSLSP) the chain is on the lumenal side. The helical transmembrane segment at 112–132 (FVFWLLYCFPVCLQFFTLTLM) threads the bilayer. The Cytoplasmic portion of the chain corresponds to 133-159 (NLYFTQVIFKAKSKYSPELLKYRLPLY). A helical membrane pass occupies residues 160-180 (LASLFISLVFLLVNLTCAVLV). Residues 181 to 188 (KTGNWERK) are Lumenal-facing. The helical transmembrane segment at 189-209 (VIVSVRVAINDTLFVLCAVSL) threads the bilayer. At 210–237 (SICLYKISKMSLANIYLESKGSSVCQVT) the chain is on the cytoplasmic side. A helical membrane pass occupies residues 238–258 (AIGVTVILLYTSRACYNLFIL). Topologically, residues 259–292 (SFSQNKSVHSFDYDWYNVSDQADLKNQLGDAGYV) are lumenal. 2 N-linked (GlcNAc...) asparagine glycosylation sites follow: N263 and N275. The helical transmembrane segment at 293 to 313 (LFGVVLFVWELLPTTLVVYFF) threads the bilayer. At 314 to 399 (RVRNPTKDLT…TLDPDKPSLG (86 aa)) the chain is on the cytoplasmic side.

The protein belongs to the GPR137 family. Interaction with RRAGA; increases RRAGA recruitment to lysosomes. Interacts with MTOR; this interaction is amino acid sensitive. As to expression, expressed in kidney, heart, brain and placenta.

It is found in the lysosome membrane. Its function is as follows. Lysosomal integral membrane protein that regulates the localization and activity of mTORC1, a signaling complex promoting cell growth in response to growth factors, energy levels, and amino acids. Interacts with Rag GTPases and increases the lysosomial localization and activity of Rag GTPases and thereby regulates mTORC1 translocation and activity in lysosome. Involved in the regulation of lysosomal morphology and autophagy. Also acts as a negative regulator of osteoclast activity. Involved in interleukin-4-induced M2 macrophage polarization. The protein is Integral membrane protein GPR137B (GPR137B) of Homo sapiens (Human).